The following is a 105-amino-acid chain: Large ribosomal subunit protein bL21 (105 aa).

Belongs to the bacterial ribosomal protein bL21 family. As to quaternary structure, part of the 50S ribosomal subunit. Contacts protein L20.

Functionally, this protein binds to 23S rRNA in the presence of protein L20. This Blochmanniella pennsylvanica (strain BPEN) protein is Large ribosomal subunit protein bL21.